A 2343-amino-acid polypeptide reads, in one-letter code: Coagulation factor VIII (2343 aa).

Positions 1–19 (MQVELYTCCFLCLLPFSLS) are cleaved as a signal peptide. Plastocyanin-like domains follow at residues 20–199 (ATRK…LLVC) and 207–343 (ERTQ…VDSC). One can recognise an F5/8 type A 1 domain in the interval 20–343 (ATRKYYLGAV…MEAYVKVDSC (324 aa)). N-linked (GlcNAc...) asparagine glycosylation is found at N233 and N253. A sulfotyrosine mark is found at Y359 and Y408. Plastocyanin-like domains lie at 393–567 (KTWV…LLIC) and 577–724 (NQMM…VSSC). Residues 393–724 (KTWVHYIAAE…MTALLKVSSC (332 aa)) form the F5/8 type A 2 domain. Residue N595 is glycosylated (N-linked (GlcNAc...) asparagine). Sulfotyrosine is present on residues Y731, Y732, and Y736. Positions 752-761 (PRSFSQNSRH) are enriched in polar residues. Disordered stretches follow at residues 752–774 (PRSF…ATTT) and 828–865 (ADDH…PEPE). The tract at residues 754–1659 (SFSQNSRHPS…NPPVSKHHQR (906 aa)) is b. Composition is skewed to basic and acidic residues over residues 828–841 (ADDH…RNKG) and 850–861 (PELRHSEDREFT). N-linked (GlcNAc...) asparagine glycosylation is found at N877, N921, N937, N938, N956, N1007, N1019, N1037, N1062, N1069, and N1080. The segment at 1124–1147 (GKNSLSSEQRPSPKQLTSLGSEKS) is disordered. Polar residues predominate over residues 1125-1147 (KNSLSSEQRPSPKQLTSLGSEKS). 12 N-linked (GlcNAc...) asparagine glycosylation sites follow: N1179, N1193, N1275, N1290, N1308, N1341, N1391, N1419, N1429, N1453, N1547, and N1618. The span at 1302–1314 (TTRMSSNASQHVI) shows a compositional bias: polar residues. Positions 1302-1326 (TTRMSSNASQHVITQRGKRSLKQPR) are disordered. The segment at 1592–1632 (KSQKKSQTNTAFKRKDTILPLGPCENNDSTAAINEGQDKPQ) is disordered. Sulfotyrosine occurs at positions 1675 and 1691. Plastocyanin-like domains lie at 1705–1869 (KTRH…LLIC) and 1879–2032 (GRQV…SKKC). Positions 1705–2032 (KTRHYFIAAV…TLFLVYSKKC (328 aa)) constitute an F5/8 type A 3 domain. N1821 is a glycosylation site (N-linked (GlcNAc...) asparagine). 2 consecutive F5/8 type C domains span residues 2032 to 2180 (CQTP…LLGC) and 2185 to 2337 (CSMP…VLGC). 2 disulfides stabilise this stretch: C2032–C2180 and C2185–C2337. N-linked (GlcNAc...) asparagine glycans are attached at residues N2129 and N2281.

Belongs to the multicopper oxidase family. Interacts with vWF. vWF binding is essential for the stabilization of F8 in circulation. In terms of processing, proteolytically cleaved by cathepsin CTSG to produce a partially activated form.

Its subcellular location is the secreted. The protein resides in the extracellular space. Functionally, factor VIII, along with calcium and phospholipid, acts as a cofactor for factor IXa when it converts factor X to the activated form, factor Xa. The chain is Coagulation factor VIII (F8) from Canis lupus familiaris (Dog).